The primary structure comprises 410 residues: Transcription termination factor, mitochondrial (410 aa).

A mitochondrion-targeting transit peptide spans 1–44 (MIRSLLRSFETALKLHAGLNMHPMHCSRRLLFSQYENRASPSRL).

The protein belongs to the mTERF family.

Its subcellular location is the mitochondrion. Functionally, transcription termination factor. Binds promoter DNA and regulates mitochondrial replication and transcription. Transcription termination activity may be polarized with highest termination activity occurring when its DNA-binding site is positioned in the reverse orientation with respect to the incoming RNA polymerase. Required for normal topology and maintenance of mitochondrial DNA (mtDNA) levels. Regulates mtDNA replication by promoting replication pausing, possibly by acting as a natural barrier to replication fork progression. Its function in replication pausing prevents unregulated replication that may occur for example by collisions between the machineries of DNA replication and transcription during mtDNA synthesis. This ensures the incorporation of RNA transcripts into replication intermediates at the replication fork and allow for proper fork progression. Shares mtDNA binding sites with the mitochondrial termination factor mTerf5 and thereby may antagonize mTerf5 function during replication to regulate pausing. Likely to function downstream of Dref which activates genes involved in mtDNA replication and maintenance. The chain is Transcription termination factor, mitochondrial from Drosophila melanogaster (Fruit fly).